The following is a 427-amino-acid chain: Phosphomethylpyrimidine synthase (427 aa).

Residues Asn-66, Met-95, Tyr-124, His-163, 185–187, 226–229, and Glu-265 contribute to the substrate site; these read SRG and DGLR. His-269 contributes to the Zn(2+) binding site. Tyr-292 serves as a coordination point for substrate. His-333 is a binding site for Zn(2+). Cys-409, Cys-412, and Cys-416 together coordinate [4Fe-4S] cluster.

Belongs to the ThiC family. In terms of assembly, homodimer. Requires [4Fe-4S] cluster as cofactor.

The enzyme catalyses 5-amino-1-(5-phospho-beta-D-ribosyl)imidazole + S-adenosyl-L-methionine = 4-amino-2-methyl-5-(phosphooxymethyl)pyrimidine + CO + 5'-deoxyadenosine + formate + L-methionine + 3 H(+). Its pathway is cofactor biosynthesis; thiamine diphosphate biosynthesis. Its function is as follows. Catalyzes the synthesis of the hydroxymethylpyrimidine phosphate (HMP-P) moiety of thiamine from aminoimidazole ribotide (AIR) in a radical S-adenosyl-L-methionine (SAM)-dependent reaction. The protein is Phosphomethylpyrimidine synthase of Syntrophus aciditrophicus (strain SB).